The primary structure comprises 102 residues: uncharacterized protein (102 aa).

2 consecutive transmembrane segments (helical) span residues 21 to 43 (FSSS…TPVF) and 58 to 80 (SFAV…YFFC).

It is found in the membrane. This is an uncharacterized protein from Saccharomyces cerevisiae (strain ATCC 204508 / S288c) (Baker's yeast).